The chain runs to 299 residues: Secreted LysM effector ldpB (299 aa).

The first 19 residues, 1–19 (MGLTSILIAQVLFLGAANS), serve as a signal peptide directing secretion. LysM domains are found at residues 46-91 (WVND…SYCV), 135-182 (AFYK…YVCI), and 211-258 (KYHK…YVCV). An N-linked (GlcNAc...) asparagine glycan is attached at N154. Residues 266 to 283 (ATATPQPTPQPQQSSSPD) are compositionally biased toward low complexity. The segment at 266 to 288 (ATATPQPTPQPQQSSSPDQPMPQ) is disordered.

Belongs to the secreted LysM effector family.

It is found in the secreted. The protein localises to the cell wall. Its subcellular location is the extracellular space. It localises to the extracellular matrix. Its function is as follows. Cell wall chitin of A.fumigatus recruits lung eosinophils during infection and ldpB might have a role in sequestration of chitin and act as triggers of host immunity to dampen host defense. This is Secreted LysM effector ldpB from Aspergillus fumigatus (strain ATCC MYA-4609 / CBS 101355 / FGSC A1100 / Af293) (Neosartorya fumigata).